The sequence spans 219 residues: Probable GTP-binding protein EngB (219 aa).

Residues 31 to 205 (VGVEIAFAGR…LSILNEWCHP (175 aa)) form the EngB-type G domain. GTP contacts are provided by residues 39–46 (GRSNAGKS), 66–70 (GRTQL), 84–87 (DLPG), 151–154 (TKSD), and 184–186 (FSA). Residues Ser-46 and Thr-68 each coordinate Mg(2+).

Belongs to the TRAFAC class TrmE-Era-EngA-EngB-Septin-like GTPase superfamily. EngB GTPase family. Requires Mg(2+) as cofactor.

In terms of biological role, necessary for normal cell division and for the maintenance of normal septation. This Shewanella putrefaciens (strain CN-32 / ATCC BAA-453) protein is Probable GTP-binding protein EngB.